Reading from the N-terminus, the 780-residue chain is ATP-dependent 6-phosphofructokinase, muscle type (780 aa).

Threonine 2 carries the post-translational modification N-acetylthreonine. The N-terminal catalytic PFK domain 1 stretch occupies residues 2–390 (THEEHHAAKS…NWEVYKLLAH (389 aa)). ATP contacts are provided by residues glycine 25, 88-89 (RC), and 118-121 (GDGS). Aspartate 119 serves as a coordination point for Mg(2+). Substrate contacts are provided by residues 164 to 166 (SID), arginine 201, 208 to 210 (MGR), glutamate 264, arginine 292, and 298 to 301 (HVQR). Aspartate 166 serves as the catalytic Proton acceptor. Serine 377 is modified (phosphoserine). Residues 391–401 (VRPPVTKSGSY) are interdomain linker. Residues 402–780 (TVAVMNVGAP…TRKRSGEATI (379 aa)) form a C-terminal regulatory PFK domain 2 region. Beta-D-fructose 2,6-bisphosphate is bound by residues arginine 471 and 528–532 (TVSNN). A glycan (O-linked (GlcNAc) serine) is linked at serine 530. Residue lysine 557 is modified to N6-(2-hydroxyisobutyryl)lysine. Beta-D-fructose 2,6-bisphosphate is bound by residues arginine 566, 573–575 (MGG), glutamate 629, arginine 655, and 661–664 (HMQQ). Serine 667 is subject to Phosphoserine. Arginine 735 is a beta-D-fructose 2,6-bisphosphate binding site. Serine 775 carries the post-translational modification Phosphoserine.

It belongs to the phosphofructokinase type A (PFKA) family. ATP-dependent PFK group I subfamily. Eukaryotic two domain clade 'E' sub-subfamily. In terms of assembly, homo- and heterotetramers. Phosphofructokinase (PFK) enzyme functions as a tetramer composed of different combinations of 3 types of subunits, called PFKM (M), PFKL (L) and PFKP (P). The composition of the PFK tetramer differs according to the tissue type it is present in. The kinetic and regulatory properties of the tetrameric enzyme are dependent on the subunit composition, hence can vary across tissues. Interacts (via C-terminus) with HK1 (via N-terminal spermatogenic cell-specific region). Mg(2+) is required as a cofactor. GlcNAcylation decreases enzyme activity.

It is found in the cytoplasm. The enzyme catalyses beta-D-fructose 6-phosphate + ATP = beta-D-fructose 1,6-bisphosphate + ADP + H(+). The protein operates within carbohydrate degradation; glycolysis; D-glyceraldehyde 3-phosphate and glycerone phosphate from D-glucose: step 3/4. With respect to regulation, allosterically activated by ADP, AMP, or fructose 2,6-bisphosphate, and allosterically inhibited by ATP or citrate. Functionally, catalyzes the phosphorylation of D-fructose 6-phosphate to fructose 1,6-bisphosphate by ATP, the first committing step of glycolysis. The protein is ATP-dependent 6-phosphofructokinase, muscle type (PFKM) of Sus scrofa (Pig).